Consider the following 70-residue polypeptide: MIMLIINYIYVINNCIYYKFLLSYLYLYCTVSNWKKYLIFFIKLEDIKVIYLILYKLGYNIINELFFRGK.

Its subcellular location is the plastid. This is an uncharacterized protein from Euglena longa (Euglenophycean alga).